A 146-amino-acid polypeptide reads, in one-letter code: D-aminoacyl-tRNA deacylase (146 aa).

Residues 137 to 138 (GP) carry the Gly-cisPro motif, important for rejection of L-amino acids motif.

Belongs to the DTD family. As to quaternary structure, homodimer.

It is found in the cytoplasm. It catalyses the reaction glycyl-tRNA(Ala) + H2O = tRNA(Ala) + glycine + H(+). The enzyme catalyses a D-aminoacyl-tRNA + H2O = a tRNA + a D-alpha-amino acid + H(+). In terms of biological role, an aminoacyl-tRNA editing enzyme that deacylates mischarged D-aminoacyl-tRNAs. Also deacylates mischarged glycyl-tRNA(Ala), protecting cells against glycine mischarging by AlaRS. Acts via tRNA-based rather than protein-based catalysis; rejects L-amino acids rather than detecting D-amino acids in the active site. By recycling D-aminoacyl-tRNA to D-amino acids and free tRNA molecules, this enzyme counteracts the toxicity associated with the formation of D-aminoacyl-tRNA entities in vivo and helps enforce protein L-homochirality. This is D-aminoacyl-tRNA deacylase from Bacillus thuringiensis subsp. konkukian (strain 97-27).